The chain runs to 425 residues: Serine--tRNA ligase 1 (425 aa).

Residue 230–232 (TSE) coordinates L-serine. Residues 261–263 (RRE) and V277 each bind ATP. E284 lines the L-serine pocket. An ATP-binding site is contributed by 348 to 351 (ELTS). T382 is a binding site for L-serine.

It belongs to the class-II aminoacyl-tRNA synthetase family. Type-1 seryl-tRNA synthetase subfamily. In terms of assembly, homodimer. The tRNA molecule binds across the dimer.

The protein localises to the cytoplasm. The catalysed reaction is tRNA(Ser) + L-serine + ATP = L-seryl-tRNA(Ser) + AMP + diphosphate + H(+). It carries out the reaction tRNA(Sec) + L-serine + ATP = L-seryl-tRNA(Sec) + AMP + diphosphate + H(+). The protein operates within aminoacyl-tRNA biosynthesis; selenocysteinyl-tRNA(Sec) biosynthesis; L-seryl-tRNA(Sec) from L-serine and tRNA(Sec): step 1/1. In terms of biological role, catalyzes the attachment of serine to tRNA(Ser). Is also able to aminoacylate tRNA(Sec) with serine, to form the misacylated tRNA L-seryl-tRNA(Sec), which will be further converted into selenocysteinyl-tRNA(Sec). The chain is Serine--tRNA ligase 1 from Streptomyces avermitilis (strain ATCC 31267 / DSM 46492 / JCM 5070 / NBRC 14893 / NCIMB 12804 / NRRL 8165 / MA-4680).